Reading from the N-terminus, the 277-residue chain is Collectin-10 (277 aa).

An N-terminal signal peptide occupies residues 1 to 27; that stretch reads MSRKKEQQLRKYGTLVVLFIFQVQIFG. The tract at residues 41–82 is disordered; that stretch reads THTILPGPKGDDGEKGDRGEVGKQGKVGPKGPKGNKGTVGDV. The span at 49–63 shows a compositional bias: basic and acidic residues; it reads KGDDGEKGDRGEVGK. The Collagen-like domain maps to 56–115; the sequence is GDRGEVGKQGKVGPKGPKGNKGTVGDVGDQGMLGKIGPIGGKGDKGAKGISGVSGKKGKA. Over residues 64 to 79 the composition is skewed to low complexity; sequence QGKVGPKGPKGNKGTV. One can recognise a C-type lectin domain in the interval 155–271; sequence TDEKFYYIVK…CQVTIYFICE (117 aa). Cystine bridges form between cysteine 176–cysteine 270 and cysteine 248–cysteine 262. N-linked (GlcNAc...) asparagine glycosylation occurs at asparagine 258.

This sequence belongs to the COLEC10/COLEC11 family. Widely expressed. Highly expressed in lung. Weakly expressed in larynx, syrinx and cranial air sac. Expressed throughout the lower gastrointestinal tract in increasing levels starting from a faint signal in duodenum and ending with relatively high signals in proctodeum, coprodeum and urodeum. In the upper part of the gastrointestinal tract, expressed in tongue, crop, and mucosa of the crop.

The protein resides in the secreted. The protein localises to the golgi apparatus. It is found in the cytoplasm. Functionally, lectin that binds to various sugars: galactose &gt; mannose = fucose &gt; N-acetylglucosamine &gt; N-acetylgalactosamine. Acts as a chemoattractant, probably involved in the regulation of cell migration. This is Collectin-10 (COLEC10) from Gallus gallus (Chicken).